A 485-amino-acid chain; its full sequence is E3 ubiquitin-protein ligase TRIM34A (485 aa).

The RING-type zinc-finger motif lies at 15–59 (CPVCQELLTKALSLGCGHRVCQACLITKKNAVINPREKSSCPVCG). Residues 91 to 132 (TKRDLCVHHGEKLLLFCKEDKKAICWVCERSQEHRGHHTFLW) form a B box-type zinc finger. Zn(2+) contacts are provided by C96, H99, C118, and H124. Residues 136-170 (VRECQENLQKALTRLRKEQEKVETLEADIKEDRLS) are a coiled coil. The B30.2/SPRY domain maps to 282-485 (LSGMLQKFRE…APMTLCPLNS (204 aa)).

The protein belongs to the TRIM/RBCC family. As to quaternary structure, homotrimer. Interacts (via B-box and SPRY domain) with TRIM5.

The protein resides in the cytoplasm. It is found in the mitochondrion. It carries out the reaction S-ubiquitinyl-[E2 ubiquitin-conjugating enzyme]-L-cysteine + [acceptor protein]-L-lysine = [E2 ubiquitin-conjugating enzyme]-L-cysteine + N(6)-ubiquitinyl-[acceptor protein]-L-lysine.. Its pathway is protein modification; protein ubiquitination. Functions as antiviral protein and contributes to the defense against retroviral infections. Acts as a capsid-specific restriction factor with the help of TRIM5 and prevents infection from non-host-adapted retroviruses. During influenza A virus infection, promotes programmed cell death by targeting ZBP1 for 'Lys-63'-linked polyubiquitination. In turn, promotes ZBP1 recruitment of RIPK3 to mediate virus-induced programmed necrosis. Negatively regulates the function of mitochondria by enhancing mitochondrial depolarization leading to cytochrome c release and mitochondria-dependent apoptosis. Also promotes the formation of multinucleated giant cells by means of cell fusion and phagocytosis in epithelial cells. Plays an essential role in sustaining the integrity of the inner mucus layer in the colon by controlling the exocytosis of the major component of colonic mucus MUC2 from colonic goblet cells. In Mus musculus (Mouse), this protein is E3 ubiquitin-protein ligase TRIM34A.